Here is a 194-residue protein sequence, read N- to C-terminus: Holliday junction branch migration complex subunit RuvA (194 aa).

Residues Met1 to Leu64 are domain I. Residues Ser65–Ser140 form a domain II region. A flexible linker region spans residues Ser140–Lys144. The interval Leu145–Arg194 is domain III.

This sequence belongs to the RuvA family. Homotetramer. Forms an RuvA(8)-RuvB(12)-Holliday junction (HJ) complex. HJ DNA is sandwiched between 2 RuvA tetramers; dsDNA enters through RuvA and exits via RuvB. An RuvB hexamer assembles on each DNA strand where it exits the tetramer. Each RuvB hexamer is contacted by two RuvA subunits (via domain III) on 2 adjacent RuvB subunits; this complex drives branch migration. In the full resolvosome a probable DNA-RuvA(4)-RuvB(12)-RuvC(2) complex forms which resolves the HJ.

Its subcellular location is the cytoplasm. Functionally, the RuvA-RuvB-RuvC complex processes Holliday junction (HJ) DNA during genetic recombination and DNA repair, while the RuvA-RuvB complex plays an important role in the rescue of blocked DNA replication forks via replication fork reversal (RFR). RuvA specifically binds to HJ cruciform DNA, conferring on it an open structure. The RuvB hexamer acts as an ATP-dependent pump, pulling dsDNA into and through the RuvAB complex. HJ branch migration allows RuvC to scan DNA until it finds its consensus sequence, where it cleaves and resolves the cruciform DNA. In Xylella fastidiosa (strain 9a5c), this protein is Holliday junction branch migration complex subunit RuvA.